Consider the following 396-residue polypeptide: Ornithine aminotransferase (396 aa).

Residue Lys-255 is modified to N6-(pyridoxal phosphate)lysine.

The protein belongs to the class-III pyridoxal-phosphate-dependent aminotransferase family. OAT subfamily. Pyridoxal 5'-phosphate serves as cofactor.

The protein localises to the cytoplasm. The enzyme catalyses a 2-oxocarboxylate + L-ornithine = L-glutamate 5-semialdehyde + an L-alpha-amino acid. It participates in amino-acid biosynthesis; L-proline biosynthesis; L-glutamate 5-semialdehyde from L-ornithine: step 1/1. In terms of biological role, catalyzes the interconversion of ornithine to glutamate semialdehyde. This is Ornithine aminotransferase from Bacillus cereus (strain Q1).